The following is a 397-amino-acid chain: Acetyl-CoA acetyltransferase, cytosolic (397 aa).

Position 1 is an N-acetylmethionine (methionine 1). Cysteine 92 (acyl-thioester intermediate) is an active-site residue. Lysine 200 carries the post-translational modification N6-acetyllysine. Residues arginine 223 and serine 226 each coordinate CoA. Residues lysine 233 and lysine 235 each carry the N6-acetyllysine modification. A CoA-binding site is contributed by serine 252. Cysteine 383 acts as the Proton donor/acceptor in catalysis.

The protein belongs to the thiolase-like superfamily. Thiolase family. Homotetramer.

The protein localises to the cytoplasm. It is found in the cytosol. The catalysed reaction is 2 acetyl-CoA = acetoacetyl-CoA + CoA. Its pathway is lipid metabolism; fatty acid metabolism. In terms of biological role, involved in the biosynthetic pathway of cholesterol. The chain is Acetyl-CoA acetyltransferase, cytosolic (ACAT2) from Homo sapiens (Human).